A 392-amino-acid polypeptide reads, in one-letter code: Solute carrier family 35 member B1 (392 aa).

Residues 1–40 (MSLTKKIKNEKSLKQEKQTDQLKSNLRNNNNNINNKSKPK) are disordered. Residues 7–20 (IKNEKSLKQEKQTD) show a composition bias toward basic and acidic residues. A compositionally biased stretch (low complexity) spans 25–35 (NLRNNNNNINN). A run of 9 helical transmembrane segments spans residues 57 to 77 (ELFF…YGLV), 97 to 117 (AFLL…VSLV), 124 to 144 (NTPF…TFLS), 155 to 175 (TQVL…LLLF), 179 to 199 (YPFL…LFML), 215 to 235 (HLFG…MGPF), 247 to 267 (ATSM…IMAF), 285 to 305 (VIKL…FIFL), and 341 to 361 (LQWA…YISY). Residues 389–392 (KKSL) carry the Di-lysine motif motif.

This sequence belongs to the nucleotide-sugar transporter family. SLC35B subfamily.

The protein resides in the endoplasmic reticulum membrane. Its function is as follows. Probable sugar transporter. The chain is Solute carrier family 35 member B1 (slc35b1) from Dictyostelium discoideum (Social amoeba).